A 493-amino-acid polypeptide reads, in one-letter code: Sulfoacetaldehyde dehydrogenase (acylating) (493 aa).

Basic residues predominate over residues 1–10 (MSVQILHRRQ). Residues 1-21 (MSVQILHRRQSNNSDLPLPTA) are disordered. Cysteine 273 acts as the Nucleophile in catalysis.

It belongs to the aldehyde dehydrogenase family. In terms of assembly, homodimer.

Its subcellular location is the cytoplasm. It carries out the reaction sulfoacetaldehyde + NADP(+) + CoA = sulfoacetyl-CoA + NADPH + H(+). Functionally, involved in the degradation of sulfoacetate, a widespread natural product. Catalyzes the conversion of sulfoacetyl-CoA and NADPH to sulfoacetaldehyde, CoA and NADP(+). Specific for NADP(+) and sulfoacetaldehyde. This Cupriavidus necator (strain ATCC 17699 / DSM 428 / KCTC 22496 / NCIMB 10442 / H16 / Stanier 337) (Ralstonia eutropha) protein is Sulfoacetaldehyde dehydrogenase (acylating).